Reading from the N-terminus, the 251-residue chain is Putative ATP-binding protein Rv3427c in insertion sequence (251 aa).

108–115 is a binding site for ATP; sequence GPVGVGKT.

It belongs to the IS21/IS1162 putative ATP-binding protein family.

The chain is Putative ATP-binding protein Rv3427c in insertion sequence from Mycobacterium tuberculosis (strain ATCC 25618 / H37Rv).